A 344-amino-acid chain; its full sequence is Deoxyhypusine hydroxylase (344 aa).

HEAT-like PBS-type repeat units lie at residues 81–107 (LKHE…VLED) and 115–140 (RHEA…FRDR). Fe cation is bound by residues histidine 83, glutamate 84, histidine 116, and glutamate 117. Residues 169-188 (EKLRASDFSSVDPAPPTAQG) are disordered. 3 HEAT-like PBS-type repeats span residues 210 to 240 (KRYR…LAKG), 248 to 274 (FRHE…ALSN), and 281 to 308 (VRHE…FLHD). Histidine 250, glutamate 251, histidine 283, and glutamate 284 together coordinate Fe cation.

It belongs to the deoxyhypusine hydroxylase family. It depends on Fe(2+) as a cofactor.

It localises to the cytoplasm. It is found in the nucleus. The enzyme catalyses [eIF5A protein]-deoxyhypusine + AH2 + O2 = [eIF5A protein]-hypusine + A + H2O. Its pathway is protein modification; eIF5A hypusination. In terms of biological role, catalyzes the hydroxylation of the N(6)-(4-aminobutyl)-L-lysine intermediate to form hypusine, an essential post-translational modification only found in mature eIF-5A factor. The polypeptide is Deoxyhypusine hydroxylase (Chaetomium globosum (strain ATCC 6205 / CBS 148.51 / DSM 1962 / NBRC 6347 / NRRL 1970) (Soil fungus)).